The following is a 594-amino-acid chain: Glutamate decarboxylase 1 (594 aa).

Residues 1–13 show a composition bias toward low complexity; the sequence is MASSTPSSSATSS. Residues 1-23 form a disordered region; sequence MASSTPSSSATSSNAGADPNTTN. S78 is subject to Phosphoserine. 190–192 contacts 4-aminobutanoate; that stretch reads QLS. K405 bears the N6-(pyridoxal phosphate)lysine mark. R567 serves as a coordination point for 4-aminobutanoate.

This sequence belongs to the group II decarboxylase family. Homodimer. Requires pyridoxal 5'-phosphate as cofactor.

The catalysed reaction is L-glutamate + H(+) = 4-aminobutanoate + CO2. In terms of biological role, catalyzes the synthesis of the inhibitory neurotransmitter gamma-aminobutyric acid (GABA) with pyridoxal 5'-phosphate as cofactor. The chain is Glutamate decarboxylase 1 (GAD1) from Bos taurus (Bovine).